The following is a 104-amino-acid chain: Large ribosomal subunit protein uL24 (104 aa).

Belongs to the universal ribosomal protein uL24 family. As to quaternary structure, part of the 50S ribosomal subunit.

Functionally, one of two assembly initiator proteins, it binds directly to the 5'-end of the 23S rRNA, where it nucleates assembly of the 50S subunit. In terms of biological role, one of the proteins that surrounds the polypeptide exit tunnel on the outside of the subunit. In Nitrobacter winogradskyi (strain ATCC 25391 / DSM 10237 / CIP 104748 / NCIMB 11846 / Nb-255), this protein is Large ribosomal subunit protein uL24.